We begin with the raw amino-acid sequence, 142 residues long: ATP synthase epsilon chain (142 aa).

This sequence belongs to the ATPase epsilon chain family. In terms of assembly, F-type ATPases have 2 components, CF(1) - the catalytic core - and CF(0) - the membrane proton channel. CF(1) has five subunits: alpha(3), beta(3), gamma(1), delta(1), epsilon(1). CF(0) has three main subunits: a, b and c.

Its subcellular location is the cell inner membrane. Produces ATP from ADP in the presence of a proton gradient across the membrane. This is ATP synthase epsilon chain from Shewanella loihica (strain ATCC BAA-1088 / PV-4).